The following is a 355-amino-acid chain: MKELKNDRYLRALLRQDVDMTPVWMMRQAGRYLPEYKATRAVAGDFMSLCRNAELACEVTLQPLRRYPLDAAILFSDILTVPDAMGLGLYFEQGEGPRFERPIKSMADVQALPIPDPEDELGYVMNAVRTIRRELKGEVPLIGFSGSPWTLATYMVEGGSSKAFTKIKQMMYAEPQTLHLLLDKLADSVIGYLNAQIKAGAQSVMVFDTWGGVLTPRDYRDFSLQYMHKIVDGLIRENEGRRVPVTLFTKNGGQWLEQIAATGCDALGLDWTIDIADAKRRVGDKVALQGNMDPSMLYAAPARIREEVATILAGFGSGNGHVFNLGHGIHQDVDPEHAGVFVNAVHELSAQYHGR.

Residues 27–31 (RQAGR), Asp77, Tyr154, Thr209, and His327 each bind substrate.

This sequence belongs to the uroporphyrinogen decarboxylase family. Homodimer.

It is found in the cytoplasm. The enzyme catalyses uroporphyrinogen III + 4 H(+) = coproporphyrinogen III + 4 CO2. It participates in porphyrin-containing compound metabolism; protoporphyrin-IX biosynthesis; coproporphyrinogen-III from 5-aminolevulinate: step 4/4. Catalyzes the decarboxylation of four acetate groups of uroporphyrinogen-III to yield coproporphyrinogen-III. In Aeromonas salmonicida (strain A449), this protein is Uroporphyrinogen decarboxylase.